The sequence spans 1141 residues: MRVRPFFNDSSWRRANLVTPIVRRKRHSYARLQSADAQLPNLIQIQLSSFQKFMDEGIRRTLEDISPIEDYSGSYAVEFGEHRFEEPPVSIEECMSKDKTYAAPLFVRVRFVIKETGEVREQDVFMGDFPLMTDWGTFIINGTERVVVTQLVRSPGAYVMEPKDPTKQVLTASLMPHRGSWLEFEVETKGYVSVRIDRKRKLPVTVLLKALGFGGPEEILARFGNSWLIRNTLERDDTTSREDALLEVFRRQRPGEPVNLENAQNLVDGLFFDPKRYDLSEVGRYKVNKKLRLDVPRDVHTLTIEDIEGLLRRLLGIAEEVAEEEEFGRINYERIRHKLDEYEHFGNRRLRTVGELVQEAFRIGMYRMERVVRERMTTQDEESITPQTVVNTKPVASAIKEFFGSSQLSQFMDQTNTLAGLSHRRRLNAMGAGGLSRERAPIEVRDVHPTHYGRMCPIETPEGPNIGLIGQLSTFARVNEYGFVQTPYRKVEDGRVTDEVEYLSADEEEEYTIAQANTPVDLETGRITAETVLARSRGGDVTTVSPEEVDYMDVSPVQTVSVATSLIPFLEHDDANRALMGANMQRQAVPLLRSEAPYVGTGMEFRAATDTGDVLLARNAGTVERVTASRIVVRREDGGLDEYALRKFARSNQGTCVNQRPLVKEGEEVEAGTVLADGSSTDQGELALGKNLLVAFMPWEGYNFEDAIIISERLVKEDVLTSIHIEEYEVQARDTKLGPEEITRDIPHASDDVLMNLDADGIIRIGAEVSSGDVLVGKVTPKGESEPTPEEKLLRAIFGEKAREVKDSSLKVPHGEGGVVIDVKRFSREAGDDLPPGVNEMVRVFVATKRKIAEGDKLAGRHGNKGVISKIVPEEDMPFMEDGTPVDVILSPLGVPSRMNIGQILETHLGWAASKGLGENGGEPVFVSTPVFSGATVADINEAIDKVRRNGAAEVGMSGGGKVTLYDGRTGEPFENKITVGYMYILKLLHLVDDKIHARSTGPYSLVTQQPLGGKAQFGGQRFGEMEVWALEAYGAAHTLQELLTIKSDDRVGRVKSYEAIVKGENIPSPSVPASFKVLLKEMQSLGLSVKPIYDVEAVSEEDQERRDWDEAARALGINISREEPPGQLDDTPDTFSRGGM.

Residues 1117-1141 (GINISREEPPGQLDDTPDTFSRGGM) are disordered.

Belongs to the RNA polymerase beta chain family. As to quaternary structure, the RNAP catalytic core consists of 2 alpha, 1 beta, 1 beta' and 1 omega subunit. When a sigma factor is associated with the core the holoenzyme is formed, which can initiate transcription.

It catalyses the reaction RNA(n) + a ribonucleoside 5'-triphosphate = RNA(n+1) + diphosphate. DNA-dependent RNA polymerase catalyzes the transcription of DNA into RNA using the four ribonucleoside triphosphates as substrates. The sequence is that of DNA-directed RNA polymerase subunit beta from Rubrobacter xylanophilus (strain DSM 9941 / JCM 11954 / NBRC 16129 / PRD-1).